We begin with the raw amino-acid sequence, 118 residues long: NADH-quinone oxidoreductase subunit A 1 (118 aa).

The next 3 membrane-spanning stretches (helical) occupy residues 1–21 (MLGV…FGLA), 60–80 (FYII…MYPW), and 87–107 (LGIF…VGYI).

Belongs to the complex I subunit 3 family. NDH-1 is composed of 14 different subunits. Subunits NuoA, H, J, K, L, M, N constitute the membrane sector of the complex.

It localises to the cell inner membrane. It catalyses the reaction a quinone + NADH + 5 H(+)(in) = a quinol + NAD(+) + 4 H(+)(out). Its function is as follows. NDH-1 shuttles electrons from NADH, via FMN and iron-sulfur (Fe-S) centers, to quinones in the respiratory chain. The immediate electron acceptor for the enzyme in this species is believed to be ubiquinone. Couples the redox reaction to proton translocation (for every two electrons transferred, four hydrogen ions are translocated across the cytoplasmic membrane), and thus conserves the redox energy in a proton gradient. This is NADH-quinone oxidoreductase subunit A 1 from Geobacter sulfurreducens (strain ATCC 51573 / DSM 12127 / PCA).